The primary structure comprises 110 residues: uncharacterized protein (110 aa).

Helical transmembrane passes span 5 to 25 (ILAI…PIHL), 62 to 82 (FPII…AIVS), and 90 to 110 (GISI…LISI).

This sequence to A.fulgidus AF1754.

The protein resides in the cell membrane. This is an uncharacterized protein from Methanocaldococcus jannaschii (strain ATCC 43067 / DSM 2661 / JAL-1 / JCM 10045 / NBRC 100440) (Methanococcus jannaschii).